Here is a 209-residue protein sequence, read N- to C-terminus: GTP-binding nuclear protein Ran1B (209 aa).

The Small GTPase Ran-type domain occupies 1-162 (NFKLVIVGDG…LYLARKLAGD (162 aa)). 9-16 (DGGTGKTT) serves as a coordination point for GTP. The segment at 28-36 (KKYEPTIGV) is switch-I. GTP contacts are provided by residues Gly59, 113 to 116 (NKVD), and 141 to 143 (SAK). Residues 59–75 (GQEKFGGLRDGYYIHGQ) are switch-II. Positions 187-200 (QHEAELAAAASQPL) are enriched in low complexity. Positions 187-209 (QHEAELAAAASQPLPDDDDDAFD) are disordered.

Belongs to the small GTPase superfamily. Ran family. Found in a nuclear export complex with RanGTP, exportin and pre-miRNA.

The protein localises to the nucleus. In terms of biological role, GTP-binding protein involved in nucleocytoplasmic transport. Required for the import of protein into the nucleus and also for RNA export. Involved in chromatin condensation and control of cell cycle. The sequence is that of GTP-binding nuclear protein Ran1B (RAN1B) from Lotus japonicus (Lotus corniculatus var. japonicus).